The following is a 494-amino-acid chain: Glutamyl-tRNA(Gln) amidotransferase subunit A (494 aa).

Active-site charge relay system residues include Lys81 and Ser156. Ser180 serves as the catalytic Acyl-ester intermediate.

Belongs to the amidase family. GatA subfamily. In terms of assembly, heterotrimer of A, B and C subunits.

It carries out the reaction L-glutamyl-tRNA(Gln) + L-glutamine + ATP + H2O = L-glutaminyl-tRNA(Gln) + L-glutamate + ADP + phosphate + H(+). Allows the formation of correctly charged Gln-tRNA(Gln) through the transamidation of misacylated Glu-tRNA(Gln) in organisms which lack glutaminyl-tRNA synthetase. The reaction takes place in the presence of glutamine and ATP through an activated gamma-phospho-Glu-tRNA(Gln). The protein is Glutamyl-tRNA(Gln) amidotransferase subunit A of Mycolicibacterium gilvum (strain PYR-GCK) (Mycobacterium gilvum (strain PYR-GCK)).